The primary structure comprises 149 residues: 3-dehydroquinate dehydratase (149 aa).

The active-site Proton acceptor is Tyr-26. Substrate-binding residues include Asn-77, His-83, and Asp-90. The active-site Proton donor is the His-103. Residues 104–105 (LS) and Arg-114 each bind substrate.

This sequence belongs to the type-II 3-dehydroquinase family. In terms of assembly, homododecamer.

It carries out the reaction 3-dehydroquinate = 3-dehydroshikimate + H2O. The protein operates within metabolic intermediate biosynthesis; chorismate biosynthesis; chorismate from D-erythrose 4-phosphate and phosphoenolpyruvate: step 3/7. In terms of biological role, catalyzes a trans-dehydration via an enolate intermediate. The sequence is that of 3-dehydroquinate dehydratase from Vibrio vulnificus (strain YJ016).